A 400-amino-acid polypeptide reads, in one-letter code: Acyl-CoA dehydrogenase FadE26 (400 aa).

Residues 127-130 (IGYS), threonine 136, and serine 162 contribute to the FAD site. The active-site Proton acceptor is the glutamate 247. 380 to 382 (TNE) serves as a coordination point for FAD.

The protein belongs to the acyl-CoA dehydrogenase family. In terms of assembly, heterotetramer (dimer of heterodimers) composed of FadE26 and FadE27. FAD is required as a cofactor.

The enzyme catalyses (25S)-3-oxocholest-4-en-26-oyl-CoA + A = 3-oxo-cholest-4,24-dien-26-oyl-CoA + AH2. Its pathway is steroid metabolism; cholesterol degradation. With respect to regulation, uncompetitively inhibited by high concentration of 3-OCS-CoA. In terms of biological role, involved in the first cycle of side chain dehydrogenation in the beta-oxidation of cholesterol catabolism. It contributes partly to the virulence by increasing the efficiency of beta-oxidation. Catalyzes the dehydrogenation of acyl-CoA ester side chains of (25S)-3-oxo-cholest-4-en-26-oyl-CoA (3-OCS-CoA) to yield (24E)-3-oxo-cholest-4,24-dien-26-oyl-CoA. Also able to dehydrogenate steroyl-CoA such as 3-oxo-chol-4-en-24-oyl-CoA (3-OCO-CoA) as well as 3-oxo-4-pregnene-20-carboxyl-CoA (3-OPC-CoA). It dehydrogenates only (25S)-OCS-CoA diastereomer. The sequence is that of Acyl-CoA dehydrogenase FadE26 (fadE26) from Mycobacterium tuberculosis (strain ATCC 25618 / H37Rv).